Consider the following 279-residue polypeptide: Urease accessory protein UreD (279 aa).

It belongs to the UreD family. In terms of assembly, ureD, UreF and UreG form a complex that acts as a GTP-hydrolysis-dependent molecular chaperone, activating the urease apoprotein by helping to assemble the nickel containing metallocenter of UreC. The UreE protein probably delivers the nickel.

Its subcellular location is the cytoplasm. Required for maturation of urease via the functional incorporation of the urease nickel metallocenter. The protein is Urease accessory protein UreD of Streptococcus thermophilus (strain ATCC BAA-250 / LMG 18311).